Reading from the N-terminus, the 148-residue chain is Nucleoside diphosphate kinase (148 aa).

The ATP site is built by lysine 9, phenylalanine 57, arginine 85, threonine 91, arginine 102, and asparagine 112. At threonine 91 the chain carries Phosphothreonine. Residue histidine 115 is the Pros-phosphohistidine intermediate of the active site. Serine 122 is modified (phosphoserine).

This sequence belongs to the NDK family. As to quaternary structure, homotetramer. Requires Mg(2+) as cofactor.

It localises to the cytoplasm. The enzyme catalyses a 2'-deoxyribonucleoside 5'-diphosphate + ATP = a 2'-deoxyribonucleoside 5'-triphosphate + ADP. It catalyses the reaction a ribonucleoside 5'-diphosphate + ATP = a ribonucleoside 5'-triphosphate + ADP. Functionally, major role in the synthesis of nucleoside triphosphates other than ATP. The ATP gamma phosphate is transferred to the NDP beta phosphate via a ping-pong mechanism, using a phosphorylated active-site intermediate. In Oceanobacillus iheyensis (strain DSM 14371 / CIP 107618 / JCM 11309 / KCTC 3954 / HTE831), this protein is Nucleoside diphosphate kinase.